A 124-amino-acid chain; its full sequence is MNVLLIFLGCGAGGVARYGVSNLMYLLMGKQFPIGTLIVNITGSLLMGILFIFILERLSGNIQLWRSLLLIGFLGGYTTFSSFSIETFNLIEAGHYFVAALNVLLSVALCIAGAWLGVLIGRQL.

Transmembrane regions (helical) follow at residues 3-23 (VLLI…VSNL), 34-54 (IGTL…FIFI), 68-88 (LLLI…IETF), and 100-120 (ALNV…GVLI). Na(+)-binding residues include glycine 75 and threonine 78.

This sequence belongs to the fluoride channel Fluc/FEX (TC 1.A.43) family.

Its subcellular location is the cell inner membrane. The catalysed reaction is fluoride(in) = fluoride(out). With respect to regulation, na(+) is not transported, but it plays an essential structural role and its presence is essential for fluoride channel function. Fluoride-specific ion channel. Important for reducing fluoride concentration in the cell, thus reducing its toxicity. In Coxiella burnetii (strain CbuK_Q154) (Coxiella burnetii (strain Q154)), this protein is Fluoride-specific ion channel FluC.